A 436-amino-acid chain; its full sequence is 3-ketoacyl-CoA thiolase (436 aa).

Residue Cys-99 is the Acyl-thioester intermediate of the active site. Catalysis depends on proton acceptor residues His-392 and Cys-422.

The protein belongs to the thiolase-like superfamily. Thiolase family. As to quaternary structure, heterotetramer of two alpha chains (FadJ) and two beta chains (FadI).

The protein resides in the cytoplasm. The enzyme catalyses an acyl-CoA + acetyl-CoA = a 3-oxoacyl-CoA + CoA. The protein operates within lipid metabolism; fatty acid beta-oxidation. Catalyzes the final step of fatty acid oxidation in which acetyl-CoA is released and the CoA ester of a fatty acid two carbons shorter is formed. The sequence is that of 3-ketoacyl-CoA thiolase from Escherichia coli O8 (strain IAI1).